A 494-amino-acid chain; its full sequence is Cheilanthifoline synthase (494 aa).

The helical transmembrane segment at 4–24 (TIWLIISTVIIVLGIAKFLLG) threads the bilayer. Residue Cys437 coordinates heme.

The protein belongs to the cytochrome P450 family. The cofactor is heme. Expressed in roots and at lower levels in stems, leaves and plantlets.

It localises to the endoplasmic reticulum membrane. It catalyses the reaction (S)-scoulerine + reduced [NADPH--hemoprotein reductase] + O2 = (S)-cheilanthifoline + oxidized [NADPH--hemoprotein reductase] + 2 H2O + H(+). In terms of biological role, methylenedioxy bridge-forming cytochrome P450 involved in the biosynthesis of isoquinoline alkaloids. Converts (S)-scoulerine into (S)-cheilanthifoline, a precursor of sanguinarine. Catalyzes an oxidative reaction that does not incorporate oxygen into the product. The sequence is that of Cheilanthifoline synthase from Argemone mexicana (Mexican prickly poppy).